The chain runs to 568 residues: Lipoprotein LpqB (568 aa).

An N-terminal signal peptide occupies residues 1-23 (MSKISTKLKALSAVLSVTTLVAG). C24 carries the N-palmitoyl cysteine lipid modification. The S-diacylglycerol cysteine moiety is linked to residue C24.

It belongs to the LpqB lipoprotein family.

It localises to the cell membrane. This chain is Lipoprotein LpqB, found in Corynebacterium glutamicum (strain R).